Here is a 219-residue protein sequence, read N- to C-terminus: Envelope protein UL45 homolog (219 aa).

The Intravirion portion of the chain corresponds to 1 to 57 (MEDYKLLQLETATVDAQAPPLPTKTVPVFAPPLSTPPQPNELVYTKRRRTKRKAKCR). A helical; Signal-anchor for type II membrane protein transmembrane segment spans residues 58–78 (CLFFTMGMFALGVLMTTAILV). The Virion surface segment spans residues 79 to 219 (STFILTVPIG…RLDHIIPFPR (141 aa)). 3 N-linked (GlcNAc...) asparagine; by host glycosylation sites follow: N113, N120, and N138.

This sequence belongs to the herpesviridae HHV-1 UL45 family. In terms of processing, N-glycosylated.

It localises to the virion membrane. This chain is Envelope protein UL45 homolog, found in Equine herpesvirus 1 (strain Ab4p) (EHV-1).